We begin with the raw amino-acid sequence, 593 residues long: Methionine--tRNA ligase (593 aa).

Residues 7 to 17 carry the 'HIGH' region motif; sequence PYANGPRHIGH. The Zn(2+) site is built by cysteine 139, cysteine 142, cysteine 152, and cysteine 155. The 'KMSKS' region signature appears at 343-347; it reads KFSTS. Threonine 346 is a binding site for ATP.

It belongs to the class-I aminoacyl-tRNA synthetase family. MetG type 1 subfamily. As to quaternary structure, monomer. Zn(2+) serves as cofactor.

It is found in the cytoplasm. The enzyme catalyses tRNA(Met) + L-methionine + ATP = L-methionyl-tRNA(Met) + AMP + diphosphate. In terms of biological role, is required not only for elongation of protein synthesis but also for the initiation of all mRNA translation through initiator tRNA(fMet) aminoacylation. This Saccharopolyspora erythraea (strain ATCC 11635 / DSM 40517 / JCM 4748 / NBRC 13426 / NCIMB 8594 / NRRL 2338) protein is Methionine--tRNA ligase.